A 255-amino-acid polypeptide reads, in one-letter code: 2-succinyl-6-hydroxy-2,4-cyclohexadiene-1-carboxylate synthase (255 aa).

The protein belongs to the AB hydrolase superfamily. MenH family. As to quaternary structure, monomer.

It catalyses the reaction 5-enolpyruvoyl-6-hydroxy-2-succinyl-cyclohex-3-ene-1-carboxylate = (1R,6R)-6-hydroxy-2-succinyl-cyclohexa-2,4-diene-1-carboxylate + pyruvate. It participates in quinol/quinone metabolism; 1,4-dihydroxy-2-naphthoate biosynthesis; 1,4-dihydroxy-2-naphthoate from chorismate: step 3/7. It functions in the pathway quinol/quinone metabolism; menaquinone biosynthesis. In terms of biological role, catalyzes a proton abstraction reaction that results in 2,5-elimination of pyruvate from 2-succinyl-5-enolpyruvyl-6-hydroxy-3-cyclohexene-1-carboxylate (SEPHCHC) and the formation of 2-succinyl-6-hydroxy-2,4-cyclohexadiene-1-carboxylate (SHCHC). This chain is 2-succinyl-6-hydroxy-2,4-cyclohexadiene-1-carboxylate synthase, found in Serratia proteamaculans (strain 568).